Consider the following 215-residue polypeptide: S-crystallin 2 (215 aa).

The 79-residue stretch at 2-80 folds into the GST N-terminal domain; the sequence is PSYTLHYFNH…YLAREFGFHG (79 aa). Residues 82–215 enclose the GST C-terminal domain; sequence NNLDMARVDF…YLKSRSSTDF (134 aa).

It belongs to the GST superfamily. In terms of tissue distribution, lens.

Its function is as follows. S-crystallins are structural components of squids and octopi eye lens. Contains relatively little GST activity (1/1000 of that of mammalian GST enzyme). This chain is S-crystallin 2 (OCTS2), found in Octopus vulgaris (Common octopus).